The chain runs to 488 residues: F-box protein At3g60790 (488 aa).

The interval 1 to 21 is disordered; it reads MTTQSSSSSSSLPSSLSSTPP. Residues 49-95 form the F-box domain; it reads VDRISMLPDEMLQKILSTLSTKDAVITSTLSKRWVDQWKRIPHLCVD.

This is F-box protein At3g60790 from Arabidopsis thaliana (Mouse-ear cress).